A 244-amino-acid chain; its full sequence is Phosphoadenosine 5'-phosphosulfate reductase (244 aa).

Cysteine 239 (nucleophile; cysteine thiosulfonate intermediate) is an active-site residue.

It belongs to the PAPS reductase family. CysH subfamily.

It localises to the cytoplasm. It catalyses the reaction [thioredoxin]-disulfide + sulfite + adenosine 3',5'-bisphosphate + 2 H(+) = [thioredoxin]-dithiol + 3'-phosphoadenylyl sulfate. It participates in sulfur metabolism; hydrogen sulfide biosynthesis; sulfite from sulfate: step 3/3. In terms of biological role, catalyzes the formation of sulfite from phosphoadenosine 5'-phosphosulfate (PAPS) using thioredoxin as an electron donor. The sequence is that of Phosphoadenosine 5'-phosphosulfate reductase from Sodalis glossinidius (strain morsitans).